Here is a 154-residue protein sequence, read N- to C-terminus: MGTNKIPKTLNGNLVLILIITIMMVTHSHGFQLEIRNELSGRYRKLVYKCWSRDNDFGWRQNWPGQYKDWSFAISLFHTYFYCHFRTAYGRVDKQLVASWELKQECGDRRKCTWVVKKDGLYLRQWKTKFFSNKYGNERWNVYIEHDVLKKSWS.

A signal peptide spans Met1–Gly30.

This sequence belongs to the plant self-incompatibility (S1) protein family.

The protein resides in the secreted. The polypeptide is S-protein homolog 12 (Arabidopsis thaliana (Mouse-ear cress)).